Consider the following 261-residue polypeptide: 14-3-3-like protein GF14-12 (261 aa).

This sequence belongs to the 14-3-3 family.

Its function is as follows. Is associated with a DNA binding complex to bind to the G box, a well-characterized cis-acting DNA regulatory element found in plant genes. The protein is 14-3-3-like protein GF14-12 (GRF2) of Zea mays (Maize).